The primary structure comprises 201 residues: Recombination protein RecR (201 aa).

A C4-type zinc finger spans residues 57-72 (CRYCRNLSDAEVCLLC). A Toprim domain is found at 80–175 (QQICVVETPA…QATRLAYGVP (96 aa)).

Belongs to the RecR family.

Functionally, may play a role in DNA repair. It seems to be involved in an RecBC-independent recombinational process of DNA repair. It may act with RecF and RecO. This is Recombination protein RecR from Dichelobacter nodosus (strain VCS1703A).